The primary structure comprises 154 residues: 6,7-dimethyl-8-ribityllumazine synthase (154 aa).

Residues Phe26, 60–62 (ALE), and 84–86 (CII) each bind 5-amino-6-(D-ribitylamino)uracil. (2S)-2-hydroxy-3-oxobutyl phosphate is bound at residue 89–90 (ET). The Proton donor role is filled by His92. Position 117 (Asn117) interacts with 5-amino-6-(D-ribitylamino)uracil. Residue Arg131 participates in (2S)-2-hydroxy-3-oxobutyl phosphate binding.

Belongs to the DMRL synthase family.

It catalyses the reaction (2S)-2-hydroxy-3-oxobutyl phosphate + 5-amino-6-(D-ribitylamino)uracil = 6,7-dimethyl-8-(1-D-ribityl)lumazine + phosphate + 2 H2O + H(+). The protein operates within cofactor biosynthesis; riboflavin biosynthesis; riboflavin from 2-hydroxy-3-oxobutyl phosphate and 5-amino-6-(D-ribitylamino)uracil: step 1/2. Catalyzes the formation of 6,7-dimethyl-8-ribityllumazine by condensation of 5-amino-6-(D-ribitylamino)uracil with 3,4-dihydroxy-2-butanone 4-phosphate. This is the penultimate step in the biosynthesis of riboflavin. The sequence is that of 6,7-dimethyl-8-ribityllumazine synthase from Polaromonas sp. (strain JS666 / ATCC BAA-500).